Consider the following 279-residue polypeptide: NAD kinase (279 aa).

D57 functions as the Proton acceptor in the catalytic mechanism. NAD(+) is bound by residues 57 to 58, 133 to 134, R159, D161, and 172 to 177; these read DG, NE, and TAYNKS.

It belongs to the NAD kinase family. A divalent metal cation is required as a cofactor.

It is found in the cytoplasm. The enzyme catalyses NAD(+) + ATP = ADP + NADP(+) + H(+). In terms of biological role, involved in the regulation of the intracellular balance of NAD and NADP, and is a key enzyme in the biosynthesis of NADP. Catalyzes specifically the phosphorylation on 2'-hydroxyl of the adenosine moiety of NAD to yield NADP. The polypeptide is NAD kinase (Streptococcus pyogenes serotype M2 (strain MGAS10270)).